The following is a 459-amino-acid chain: tRNA modification GTPase MnmE (459 aa).

3 residues coordinate (6S)-5-formyl-5,6,7,8-tetrahydrofolate: Arg22, Glu85, and Arg124. The TrmE-type G domain maps to 221 to 380; the sequence is GLSTVIVGKP…LEIQIRDLFF (160 aa). Asn231 lines the K(+) pocket. GTP contacts are provided by residues 231–236, 250–256, and 275–278; these read NVGKSS, TEVAGTT, and DTAG. Residue Ser235 participates in Mg(2+) binding. 3 residues coordinate K(+): Thr250, Val252, and Thr255. Residue Thr256 coordinates Mg(2+). Lys459 contacts (6S)-5-formyl-5,6,7,8-tetrahydrofolate.

This sequence belongs to the TRAFAC class TrmE-Era-EngA-EngB-Septin-like GTPase superfamily. TrmE GTPase family. In terms of assembly, homodimer. Heterotetramer of two MnmE and two MnmG subunits. Requires K(+) as cofactor.

It is found in the cytoplasm. Its function is as follows. Exhibits a very high intrinsic GTPase hydrolysis rate. Involved in the addition of a carboxymethylaminomethyl (cmnm) group at the wobble position (U34) of certain tRNAs, forming tRNA-cmnm(5)s(2)U34. This Staphylococcus aureus (strain MSSA476) protein is tRNA modification GTPase MnmE.